Here is a 254-residue protein sequence, read N- to C-terminus: 3-beta-hydroxysteroid dehydrogenase (254 aa).

Residues Val12 to Asn40 and Asp61 each bind NAD(+). Ser139 is a substrate binding site. Residue Tyr152 is the Proton acceptor of the active site. Position 156 (Lys156) interacts with NAD(+).

This sequence belongs to the short-chain dehydrogenases/reductases (SDR) family. Homotetramer.

It catalyses the reaction testosterone + NAD(+) = androst-4-ene-3,17-dione + NADH + H(+). The enzyme catalyses testosterone + NADP(+) = androst-4-ene-3,17-dione + NADPH + H(+). This chain is 3-beta-hydroxysteroid dehydrogenase, found in Comamonas testosteroni (Pseudomonas testosteroni).